The following is a 525-amino-acid chain: cAMP-dependent protein kinase regulatory subunit (525 aa).

The dimerization and phosphorylation stretch occupies residues 28–213 (QFCANWFNSK…RIRGSIGNNL (186 aa)). Disordered regions lie at residues 114-146 (MDAS…SSLG) and 170-196 (SVSA…TVIP). Residues 124-146 (PAPATPAAPAAPAAPAAPFSSLG) show a composition bias toward low complexity. S170 is modified (phosphoserine; by autocatalysis). Residues 214 to 345 (LFRN…FLMD) and 348 to 472 (LFER…TYGD) contribute to the a nucleoside 3',5'-cyclic phosphate site. 3',5'-cyclic AMP is bound by residues E295, R304, and E417. Residues 497–525 (SGADTSFPHPMDSSAKPGEGAWSAPNPFA) are disordered.

The protein belongs to the cAMP-dependent kinase regulatory chain family. Tetramer, composed of 2 regulatory (R) and 2 catalytic (C) subunits. In the presence of cAMP it dissociates into 2 active monomeric C subunits and an R dimer.

The chain is cAMP-dependent protein kinase regulatory subunit (PKAR) from Mycosarcoma maydis (Corn smut fungus).